The chain runs to 451 residues: Tubulin gamma-1 chain (451 aa).

A Phosphoserine; by BRSK1 modification is found at serine 131. Position 142 to 148 (alanine 142 to glycine 148) interacts with GTP.

The protein belongs to the tubulin family. In terms of assembly, component of the gamma-tubulin ring complex (gTuRC) consisting of TUBGCP2, TUBGCP3, TUBGCP4, TUBGCP5 and TUBGCP6 and gamma-tubulin TUBG1 or TUBG2. TUBGCP2, TUBGCP3, TUBGCP4, TUBGCP5 and TUBGCP6 assemble in a 5:5:2:1:1 stoichiometry; each is associated with a gamma-tubulin, thereby arranging 14 gamma-tubulins in a helical manner. Gamma-tubulin at the first position is blocked by TUBGCP3 at the last position, allowing 13 protafilaments to grow into a microtubule. The gTuRC (via TUBGCP3 and TUBGCP6) interacts with ACTB and MZT1; the interactions form a luminal bridge that stabilizes the initial structure during complex assembly. The gTuRC (via TUBGCP2) interacts with MZT2A/MZT2B and CDK5RAP2 (via CM1 motif); the interactions play a role in gTuRC activation. Interacts with alpha-beta tubulin heterodimers; the interaction allows microtubules to nucleate from the gTuRC. Interacts with B9D2. Interacts with CDK5RAP2; the interaction is leading to centrosomal localization of TUBG1 and CDK5RAP2. Interacts with CIMAP3. Interacts with SAS6 and NUP62 at the centrosome. Interacts with EML3 (phosphorylated at 'Thr-881') and HAUS8. Interacts with DNM2; this interaction may participate in centrosome cohesion. Interacts with CCDC66. In terms of processing, phosphorylation at Ser-131 by BRSK1 regulates centrosome duplication, possibly by mediating relocation of gamma-tubulin and its associated proteins from the cytoplasm to the centrosome.

The protein localises to the cytoplasm. It localises to the cytoskeleton. Its subcellular location is the microtubule organizing center. It is found in the centrosome. The protein resides in the spindle. Functionally, tubulin is the major constituent of microtubules, protein filaments consisting of alpha- and beta-tubulin heterodimers. Gamma-tubulin is a key component of the gamma-tubulin ring complex (gTuRC) which mediates microtubule nucleation. The gTuRC regulates the minus-end nucleation of alpha-beta tubulin heterodimers that grow into microtubule protafilaments, a critical step in centrosome duplication and spindle formation. The protein is Tubulin gamma-1 chain of Canis lupus familiaris (Dog).